We begin with the raw amino-acid sequence, 1214 residues long: Protein charlatan (1214 aa).

Disordered regions lie at residues 1–20, 213–238, and 250–284; these read MATL…QSSN, HVNQ…RQEH, and SANA…GGRK. The segment covering 258 to 276 has biased composition (low complexity); sequence AQSTPTSAPSNSSGGSTSS. 2 C2H2-type zinc fingers span residues 305–327 and 333–356; these read YACT…ENIH and FQCY…LRMH. Disordered stretches follow at residues 367 to 397 and 463 to 488; these read RRHV…NVTI and PVAS…SGLL. Positions 473-485 are enriched in gly residues; that stretch reads GSHGGNGNGGSGS. 2 consecutive C2H2-type zinc fingers follow at residues 496–518 and 522–545; these read FTCC…LNTH and FVCL…LKVH. Disordered regions lie at residues 741–790, 848–946, and 1062–1084; these read SASS…ATSP, NDED…SGPS, and LSTP…SNAS. Low complexity-rich tracts occupy residues 855 to 871, 885 to 896, 923 to 946, and 1071 to 1084; these read QQHQ…QQQQ, NNNNNNNSNNNN, SPGT…SGPS, and KAAP…SNAS.

In terms of tissue distribution, expressed in the PNS and CNS. In early blastoderm stages, it is ubiquitously expressed, then, before stage 5, it disappears from the poles of the embryo and faint stripes are visible. At stage 5, it also accumulates in the dorsal region, cephalic furrow ectodermal patches between the tracheal pits, where neurons of the PNS appear. In older embryos (stage 15) a strong expression is mostly restricted to the central nervous system (CNS) and PNS. In PNS, the pattern suggests that expression occur in many of the neurons of the ventral, lateral and dorsal clusters of neurons. In third instar wing disks, it is expressed in rows of cells on either side of the prospective anterior wing margin and in groups of cells that coincide with proneural clusters of ac/sc expression. Also expressed independently of ac/sc in certain areas of the disk, such as the postnotum and posterior dorsal proximal wing. Expressed in the proneural clusters of the leg disks and in the eye/antenna disk.

The protein resides in the nucleus. Functionally, probable transcription factor involved in the development of the adult pattern of macrochaetae. Required for accumulation of achaete (ac) and scute (sc) in proneural clusters. Probably acts by binding to the proneural cluster-specific enhancers of the ac/sc complex and increasing enhancer efficiency, thereby acting as a stimulator of ac/sc expression in proneural clusters. Also required for correct development of the embryonic/larval peripheral nervous system (PNS). This chain is Protein charlatan (chn), found in Drosophila melanogaster (Fruit fly).